The following is a 72-amino-acid chain: Translation initiation factor IF-1 (72 aa).

Residues 1–72 (MSKEGKITLK…TRGRIIYRIS (72 aa)) enclose the S1-like domain.

This sequence belongs to the IF-1 family. In terms of assembly, component of the 30S ribosomal translation pre-initiation complex which assembles on the 30S ribosome in the order IF-2 and IF-3, IF-1 and N-formylmethionyl-tRNA(fMet); mRNA recruitment can occur at any time during PIC assembly.

The protein localises to the cytoplasm. In terms of biological role, one of the essential components for the initiation of protein synthesis. Stabilizes the binding of IF-2 and IF-3 on the 30S subunit to which N-formylmethionyl-tRNA(fMet) subsequently binds. Helps modulate mRNA selection, yielding the 30S pre-initiation complex (PIC). Upon addition of the 50S ribosomal subunit IF-1, IF-2 and IF-3 are released leaving the mature 70S translation initiation complex. This is Translation initiation factor IF-1 from Malacoplasma penetrans (strain HF-2) (Mycoplasma penetrans).